The sequence spans 31 residues: Cytochrome b6-f complex subunit 6 (31 aa).

A helical transmembrane segment spans residues 4-26 (ITSYFGFLLAALTITPALLISLN).

It belongs to the PetL family. The 4 large subunits of the cytochrome b6-f complex are cytochrome b6, subunit IV (17 kDa polypeptide, PetD), cytochrome f and the Rieske protein, while the 4 small subunits are PetG, PetL, PetM and PetN. The complex functions as a dimer.

Its subcellular location is the plastid. It localises to the chloroplast thylakoid membrane. In terms of biological role, component of the cytochrome b6-f complex, which mediates electron transfer between photosystem II (PSII) and photosystem I (PSI), cyclic electron flow around PSI, and state transitions. PetL is important for photoautotrophic growth as well as for electron transfer efficiency and stability of the cytochrome b6-f complex. The protein is Cytochrome b6-f complex subunit 6 of Dioscorea elephantipes (Elephant's foot yam).